Consider the following 37-residue polypeptide: Photosystem II reaction center protein M (37 aa).

A helical transmembrane segment spans residues 7-27; that stretch reads AFIAVLLFLAVPTAFLLIPYV.

This sequence belongs to the PsbM family. PSII is composed of 1 copy each of membrane proteins PsbA, PsbB, PsbC, PsbD, PsbE, PsbF, PsbH, PsbI, PsbJ, PsbK, PsbL, PsbM, PsbT, PsbX, PsbY, PsbZ, Psb30/Ycf12, at least 3 peripheral proteins of the oxygen-evolving complex and a large number of cofactors. It forms dimeric complexes.

It localises to the plastid. The protein localises to the chloroplast thylakoid membrane. In terms of biological role, one of the components of the core complex of photosystem II (PSII). PSII is a light-driven water:plastoquinone oxidoreductase that uses light energy to abstract electrons from H(2)O, generating O(2) and a proton gradient subsequently used for ATP formation. It consists of a core antenna complex that captures photons, and an electron transfer chain that converts photonic excitation into a charge separation. This subunit is found at the monomer-monomer interface. The protein is Photosystem II reaction center protein M of Pinus thunbergii (Japanese black pine).